The chain runs to 319 residues: Acetyl-coenzyme A carboxylase carboxyl transferase subunit alpha (319 aa).

The CoA carboxyltransferase C-terminal domain maps to 35 to 296 (DLDKEIEQLE…KATLVANLAE (262 aa)).

This sequence belongs to the AccA family. Acetyl-CoA carboxylase is a heterohexamer composed of biotin carboxyl carrier protein (AccB), biotin carboxylase (AccC) and two subunits each of ACCase subunit alpha (AccA) and ACCase subunit beta (AccD).

Its subcellular location is the cytoplasm. It catalyses the reaction N(6)-carboxybiotinyl-L-lysyl-[protein] + acetyl-CoA = N(6)-biotinyl-L-lysyl-[protein] + malonyl-CoA. It functions in the pathway lipid metabolism; malonyl-CoA biosynthesis; malonyl-CoA from acetyl-CoA: step 1/1. In terms of biological role, component of the acetyl coenzyme A carboxylase (ACC) complex. First, biotin carboxylase catalyzes the carboxylation of biotin on its carrier protein (BCCP) and then the CO(2) group is transferred by the carboxyltransferase to acetyl-CoA to form malonyl-CoA. The polypeptide is Acetyl-coenzyme A carboxylase carboxyl transferase subunit alpha (Photobacterium profundum (strain SS9)).